Reading from the N-terminus, the 328-residue chain is Cytochrome c biogenesis protein CcsA (328 aa).

Helical transmembrane passes span 13 to 33 (ISFSVVLIVMTIYFLTLLVNL), 46 to 66 (GIVITFFSITGFLFTRWIYSG), 73 to 93 (LYESLIFLSWAFSIIHMVSYF), 101 to 121 (LNAITAPSAIFIQGFATSGLL), 146 to 166 (MVLGYGALLCGSLLSIALLVI), 234 to 254 (IISLGFLFLTMGILSGAVWAN), 263 to 283 (WDPKETWAFITWTIFAIYLHI), and 295 to 315 (AIVASIGFLVIWICYFGVNLL).

This sequence belongs to the CcmF/CycK/Ccl1/NrfE/CcsA family. In terms of assembly, may interact with Ccs1.

It localises to the plastid. It is found in the chloroplast thylakoid membrane. Its function is as follows. Required during biogenesis of c-type cytochromes (cytochrome c6 and cytochrome f) at the step of heme attachment. The sequence is that of Cytochrome c biogenesis protein CcsA from Aethionema cordifolium (Lebanon stonecress).